A 101-amino-acid chain; its full sequence is Large ribosomal subunit protein eL43 (101 aa).

The C4-type zinc-finger motif lies at 40-62 (CPSCRSLVRLKRLAFGIWQCPKC).

This sequence belongs to the eukaryotic ribosomal protein eL43 family. The cofactor is Zn(2+).

This Pyrobaculum islandicum (strain DSM 4184 / JCM 9189 / GEO3) protein is Large ribosomal subunit protein eL43.